A 429-amino-acid chain; its full sequence is Glutamate-1-semialdehyde 2,1-aminomutase 2 (429 aa).

Lys-268 is modified (N6-(pyridoxal phosphate)lysine).

Belongs to the class-III pyridoxal-phosphate-dependent aminotransferase family. HemL subfamily. As to quaternary structure, homodimer. Pyridoxal 5'-phosphate is required as a cofactor.

Its subcellular location is the cytoplasm. It catalyses the reaction (S)-4-amino-5-oxopentanoate = 5-aminolevulinate. The protein operates within porphyrin-containing compound metabolism; protoporphyrin-IX biosynthesis; 5-aminolevulinate from L-glutamyl-tRNA(Glu): step 2/2. The polypeptide is Glutamate-1-semialdehyde 2,1-aminomutase 2 (Bacillus velezensis (strain DSM 23117 / BGSC 10A6 / LMG 26770 / FZB42) (Bacillus amyloliquefaciens subsp. plantarum)).